We begin with the raw amino-acid sequence, 271 residues long: D-methionine-binding lipoprotein MetQ (271 aa).

An N-terminal signal peptide occupies residues 1 to 22 (MAFKFKTFAAVGALIGSLALVG). C23 is lipidated: N-palmitoyl cysteine. The S-diacylglycerol cysteine moiety is linked to residue C23.

This sequence belongs to the NlpA lipoprotein family.

The protein resides in the cell membrane. This protein is a component of a D-methionine permease, a binding protein-dependent, ATP-driven transport system. The protein is D-methionine-binding lipoprotein MetQ (metQ) of Escherichia coli (strain K12).